A 306-amino-acid chain; its full sequence is MYDTDPHRRGSRPGPYHGKERRRSRSSAAGGTLGVVRRASRKSLPPHARKQELCLHERQRYRGLFAALAQTPSEEIAIVRSLSVPLVKTTPVSLPFCLDQTVADNCLTLSGMGYYLGIGGCCPACNAGDGRFAATSREALILAFVQQINTIFEHRAFLASLVVLADRHNAPLQDLLAGILGQPELFFVHTILRGGGACDPRLLFYPDPTYGGHMLYVIFPGTSAHLHYRLIDRMLTACPGYRFVAHVWQSTFVLVVRRNAEKPTDAEIPTVSAADIYCKMRDISFDGGLMLEYQRLYATFDEFPPP.

The disordered stretch occupies residues 1–49 (MYDTDPHRRGSRPGPYHGKERRRSRSSAAGGTLGVVRRASRKSLPPHAR). The CCCH-type zinc-finger motif lies at 106–225 (CLTLSGMGYY…YVIFPGTSAH (120 aa)).

The protein belongs to the herpesviridae NEC1 protein family. Forms a heterohexameric complex with NEC2. Interacts with capsid vertex specific component 2/CVC2; this interaction directs the capsid to the host inner nuclear membrane to initiate budding. In terms of processing, phosphorylated at serine residues in the N-terminus. This phosphorylation regulates the localization within the inner nuclear membrane.

The protein resides in the host nucleus inner membrane. Its function is as follows. Plays an essential role in virion nuclear egress, the first step of virion release from infected cell. Within the host nucleus, NEC1 interacts with the newly formed capsid through the vertexes and directs it to the inner nuclear membrane by associating with NEC2. Induces the budding of the capsid at the inner nuclear membrane as well as its envelopment into the perinuclear space. There, the NEC1/NEC2 complex promotes the fusion of the enveloped capsid with the outer nuclear membrane and the subsequent release of the viral capsid into the cytoplasm where it will reach the secondary budding sites in the host Golgi or trans-Golgi network. The chain is Nuclear egress protein 1 from Human herpesvirus 1 (strain 17) (HHV-1).